We begin with the raw amino-acid sequence, 254 residues long: 5-oxoprolinase subunit A (254 aa).

It belongs to the LamB/PxpA family. As to quaternary structure, forms a complex composed of PxpA, PxpB and PxpC.

It catalyses the reaction 5-oxo-L-proline + ATP + 2 H2O = L-glutamate + ADP + phosphate + H(+). Catalyzes the cleavage of 5-oxoproline to form L-glutamate coupled to the hydrolysis of ATP to ADP and inorganic phosphate. The polypeptide is 5-oxoprolinase subunit A (Acinetobacter baumannii (strain ATCC 17978 / DSM 105126 / CIP 53.77 / LMG 1025 / NCDC KC755 / 5377)).